Reading from the N-terminus, the 105-residue chain is Nitrogen fixation nifHD region GlnB-like protein 1 (105 aa).

This sequence belongs to the P(II) protein family.

In terms of biological role, could be involved in the regulation of nitrogen fixation. The chain is Nitrogen fixation nifHD region GlnB-like protein 1 (glnBA) from Methanobacterium ivanovii.